The following is a 457-amino-acid chain: Probable ECA polymerase (457 aa).

The next 11 helical transmembrane spans lie at 3–23, 41–61, 65–85, 118–138, 154–174, 181–201, 206–226, 227–247, 340–360, 377–397, and 408–428; these read LLQFAGLLLVWLVCGGFILTL, MLFLLTFFFGFPLTCILVFGF, VVPAEYLLQALLSAGCFYAIY, IMALVALITVSVFFLHNGFLL, GVALKRFFYFFIPAMLVVYFL, WLLFLVGTVAFGLLTYAIVGG, IIIAFALFLFIGIIRGWITLW, MLALAGVGAIVAMFWLALKRY, LVVMGGALFIMLGAVMVGLII, YKAAILQSFCFGAVFNMIVLA, and VVFFCVIFAACVLVAKLLYWL.

It belongs to the WzyE family. Probably part of a complex composed of WzxE, WzyE and WzzE.

Its subcellular location is the cell inner membrane. It participates in bacterial outer membrane biogenesis; enterobacterial common antigen biosynthesis. Its function is as follows. Probably involved in the polymerization of enterobacterial common antigen (ECA) trisaccharide repeat units. The protein is Probable ECA polymerase of Erwinia tasmaniensis (strain DSM 17950 / CFBP 7177 / CIP 109463 / NCPPB 4357 / Et1/99).